The primary structure comprises 78 residues: RNA-binding protein KhpA (78 aa).

A KH domain is found at 29–78 (TIIYELTVAKGDIGKIIGKEGRTIKAIRTLLVSVASRDNVKVSLEIMEER).

This sequence belongs to the KhpA RNA-binding protein family.

It is found in the cytoplasm. Its function is as follows. A probable RNA-binding protein. In Chlamydia muridarum (strain MoPn / Nigg), this protein is RNA-binding protein KhpA.